A 343-amino-acid chain; its full sequence is Transcription factor MYB83 (343 aa).

Over residues 1–16 the composition is skewed to basic and acidic residues; the sequence is MMMRKPDITTIRDKGK. The disordered stretch occupies residues 1-33; it reads MMMRKPDITTIRDKGKPNHACGGNNNKPKLRKG. 2 consecutive HTH myb-type domains span residues 27–79 and 80–134; these read KPKL…INYL and RPDL…KKRL. 2 DNA-binding regions (H-T-H motif) span residues 55–79 and 107–130; these read WSDI…INYL and WSQI…NSTL. The segment at 134 to 172 is disordered; that stretch reads LKNNSNNNTSSGSSPNNSNSNSLDPRDQHVDMGGNSTSL. Residues 136–155 show a composition bias toward low complexity; that stretch reads NNSNNNTSSGSSPNNSNSNS.

Expressed specifically in fiber and vessel cells that are undergoing secondary wall thickening in floral stems. Expressed in vessels but not in xylary fibers in the developing secondary xylem of roots.

The protein resides in the nucleus. Transcription factor that acts as a molecular switch in the NAC012/SND1-mediated transcriptional network regulating secondary wall biosynthesis. Is directly activated by NAC012/SND1 and its close homologs, including NAC043/NST1, NAC066/NST2, NAC101/VND6 and NAC030/VND7. Is required for functional expression of a number of secondary wall-associated transcription factors and secondary wall biosynthetic genes involved in cellulose, xylan and lignin synthesis. Functions redundantly with MYB46 in the transcriptional regulatory cascade leading to secondary wall formation in fibers and vessels. Transcription activator that binds to the DNA consensus sequence 5'-ACC[AT]A[AC][TC]-3', designated as the secondary wall MYB-responsive element (SMRE). Regulates directly numerous transcription factors and a number of genes involved in secondary wall biosynthesis that contain SMRE elements in their promoters. This chain is Transcription factor MYB83, found in Arabidopsis thaliana (Mouse-ear cress).